The chain runs to 473 residues: Vasculin-like protein 1 (473 aa).

Polar residues predominate over residues 14 to 25; the sequence is STPQSSKSSTAT. A disordered region spans residues 14–55; it reads STPQSSKSSTATFDKHGEHLSRGEGRFGISRRRHNSSDGFFN. Residues 26–38 show a composition bias toward basic and acidic residues; the sequence is FDKHGEHLSRGEG. Residues Ser49 and Ser76 each carry the phosphoserine modification. 2 disordered regions span residues 88–127 and 155–189; these read GTTGWHGSSRGHDGMSQRSGGSSTGNHRHWNGSFHSRKGC and DFPSLNPEAGKQNQPCRPVGTPSGVWENPPSAKQP. The segment covering 103 to 112 has biased composition (polar residues); sequence SQRSGGSSTG. A compositionally biased stretch (basic residues) spans 113–125; that stretch reads NHRHWNGSFHSRK. Ser199 bears the Phosphoserine mark. Disordered stretches follow at residues 235 to 267 and 281 to 316; these read LVPKPAPPPSKPNAWKANRTEHKPGSLCSSRES and LAAGAGLHSPKESPSSTTPPIEISSSRLTKLTRRTT. Position 289 is a phosphoserine (Ser289). Low complexity predominate over residues 292-309; sequence ESPSSTTPPIEISSSRLT. At Thr298 the chain carries Phosphothreonine. Ser381 is modified (phosphoserine). The tract at residues 453–473 is disordered; it reads ECEDSDSETSSSQTSDDDAWK.

Belongs to the vasculin family.

The protein localises to the nucleus. In terms of biological role, possible transcription factor. The chain is Vasculin-like protein 1 (Gpbp1l1) from Mus musculus (Mouse).